The sequence spans 37 residues: Fructose-bisphosphate aldolase A (37 aa).

This sequence belongs to the class I fructose-bisphosphate aldolase family. As to quaternary structure, tetramer.

It catalyses the reaction beta-D-fructose 1,6-bisphosphate = D-glyceraldehyde 3-phosphate + dihydroxyacetone phosphate. The protein operates within carbohydrate degradation; glycolysis; D-glyceraldehyde 3-phosphate and glycerone phosphate from D-glucose: step 4/4. Plays a key role in glycolysis and gluconeogenesis. The polypeptide is Fructose-bisphosphate aldolase A (Thunnus albacares (Yellowfin tuna)).